A 389-amino-acid chain; its full sequence is 26S proteasome non-ATPase regulatory subunit 6 (389 aa).

Residues 193–361 (DFKQAAELFL…EVVETNRPDS (169 aa)) form the PCI domain.

This sequence belongs to the proteasome subunit S10 family. Component of the 19S proteasome regulatory particle complex. The 26S proteasome consists of a 20S core particle (CP) and two 19S regulatory subunits (RP). The regulatory particle is made of a lid composed of 9 subunits including PSMD6, a base containing 6 ATPases and few additional components.

In terms of biological role, component of the 26S proteasome, a multiprotein complex involved in the ATP-dependent degradation of ubiquitinated proteins. This complex plays a key role in the maintenance of protein homeostasis by removing misfolded or damaged proteins, which could impair cellular functions, and by removing proteins whose functions are no longer required. Therefore, the proteasome participates in numerous cellular processes, including cell cycle progression, apoptosis, or DNA damage repair. This chain is 26S proteasome non-ATPase regulatory subunit 6 (PSMD6), found in Bos taurus (Bovine).